A 758-amino-acid polypeptide reads, in one-letter code: MAEPHQEFDVTEDHAGTYGLGDRKDQGGYTMLQDQEGDTDAGLKESPLQTPAEDGSEEPGSETSDAKSTPTAEDVTAPLVDERAPGEQAAAQPHMEIPXGTTAEEAGIGDTPSLEDEAAGHVTQEPESGKVVREGFLGEPGPPGLSHQLVSGMPGAPLLPEGPREATRQPSGIGPEDTEGGRHAPELLKHQLLGDLHQEGPPLKGAGGKERPGSKEEVDEDRDVDESSPQDSPPSKVSPAQDGWPPQAAAREATSIPGFPAEGAIPLPVDFLSKVSTEIPASEPDRPSAGGAEGQDAPPEFTFHVEITPNVQKEQAHSEEHLRRAAFPGAPGEGPEAQGPSLGEDAKEADLPEPSEKQPAAAPRGKPISRVPQLKARMVSKSKDGTGSDDKKAKTSTRSSAKTLKNRPCLSPKHPTPGSSDPLIQPSSPAVCPEPPSSPKYVSSVTPRTGSSGAKEMKLKGADGKTKIATPRGAAPPGQKGQANATRIPAKTPPAPKTPPSSGEPPKSGDRSGYSSPGSPGTPGSRSRTPSLPTPPTREPKKVAVVRTPPKSPSSAKSRLQTAPVPMPDLKNVKSKIGSTENLKHQPGGGKVQIINKKLDLSNVQSKCGSKDNIKHVPGGGSVQIVYKPVDLSKVTSKCGSLGNIHHKPGGGQVEVKSEKLDFKDRVQSKIGSLDNITHVPGGGHKKIETHKLTFRENAKAKTDHGAEIVYKSPVVSGDTSPRHLSNVSSTGSIDMVDSPQLATLADEVSASLAKQGL.

Residues 1–26 (MAEPHQEFDVTEDHAGTYGLGDRKDQ) are compositionally biased toward basic and acidic residues. A disordered region spans residues 1–573 (MAEPHQEFDV…PVPMPDLKNV (573 aa)). A2 carries the N-acetylalanine modification. Residues Y18 and Y29 each carry the phosphotyrosine modification. K44 participates in a covalent cross-link: Glycyl lysine isopeptide (Lys-Gly) (interchain with G-Cter in ubiquitin). 2 positions are modified to phosphoserine: S46 and S61. Residues 61-71 (SETSDAKSTPT) are compositionally biased toward polar residues. Phosphothreonine is present on residues T69, T71, and T111. 2 stretches are compositionally biased toward basic and acidic residues: residues 179-189 (EGGRHAPELLK) and 207-216 (GGKERPGSKE). S214 is modified (phosphoserine). Positions 217-228 (EVDEDRDVDESS) are enriched in acidic residues. Basic and acidic residues predominate over residues 314 to 323 (EQAHSEEHLR). The segment covering 325–340 (AAFPGAPGEGPEAQGP) has biased composition (low complexity). Basic and acidic residues-rich tracts occupy residues 344-356 (EDAKEADLPEPSE) and 381-393 (KSKDGTGSDDKKA). The segment covering 440–452 (KYVSSVTPRTGSS) has biased composition (polar residues). Over residues 455–466 (KEMKLKGADGKT) the composition is skewed to basic and acidic residues. T470 carries the phosphothreonine modification. R472 carries the omega-N-methylarginine modification. K480 carries the N6,N6-dimethyllysine; alternate modification. K480 is modified (N6-acetyllysine; alternate). Phosphothreonine occurs at positions 486, 492, and 498. The span at 491-503 (KTPPAPKTPPSSG) shows a compositional bias: pro residues. A phosphoserine mark is found at S502, S508, and S512. Residues 504–531 (EPPKSGDRSGYSSPGSPGTPGSRSRTPS) show a composition bias toward low complexity. Y514 bears the Phosphotyrosine mark. Phosphoserine occurs at positions 515, 516, and 519. Phosphothreonine is present on residues T522 and T529. At S531 the chain carries Phosphoserine. Position 534 is a phosphothreonine (T534). K542 is subject to N6-acetyllysine. T548 bears the Phosphothreonine mark. Residues S552 and S554 each carry the phosphoserine modification. 4 Tau/MAP repeats span residues 561 to 591 (QTAPVPMPDLKNVKSKIGSTENLKHQPGGGK), 592 to 622 (VQIINKKLDLSNVQSKCGSKDNIKHVPGGGS), 623 to 653 (VQIVYKPVDLSKVTSKCGSLGNIHHKPGGGQ), and 654 to 685 (VEVKSEKLDFKDRVQSKIGSLDNITHVPGGGH). K571 is covalently cross-linked (Glycyl lysine isopeptide (Lys-Gly) (interchain with G-Cter in ubiquitin)). K576 carries the post-translational modification N6-acetyllysine; alternate. K576 carries the N6-methyllysine; alternate modification. Residue K576 forms a Glycyl lysine isopeptide (Lys-Gly) (interchain with G-Cter in ubiquitin); alternate linkage. S579 bears the Phosphoserine mark. K584 participates in a covalent cross-link: Glycyl lysine isopeptide (Lys-Gly) (interchain with G-Cter in ubiquitin). N6-acetyllysine; alternate is present on K598. K598 is covalently cross-linked (Glycyl lysine isopeptide (Lys-Gly) (interchain with G-Cter in ubiquitin); alternate). S602 and S606 each carry phosphoserine. K607 is modified (N6-acetyllysine). S610 is subject to Phosphoserine. An N6-acetyllysine; alternate modification is found at K615. A Glycyl lysine isopeptide (Lys-Gly) (interchain with G-Cter in ubiquitin); alternate cross-link involves residue K615. The residue at position 622 (S622) is a Phosphoserine. The residue at position 628 (K628) is an N6,N6-dimethyllysine; alternate. N6-acetyllysine; alternate is present on residues K628, K634, and K638. Residues K628, K634, and K638 each participate in a glycyl lysine isopeptide (Lys-Gly) (interchain with G-Cter in ubiquitin); alternate cross-link. A Phosphoserine modification is found at S641. An N6-acetyllysine; alternate mark is found at K648, K660, and K664. Glycyl lysine isopeptide (Lys-Gly) (interchain with G-Cter in ubiquitin); alternate cross-links involve residues K648, K660, and K664. Position 666 is an omega-N-methylarginine (R666). S669 carries the phosphoserine modification. K670 is covalently cross-linked (Glycyl lysine isopeptide (Lys-Gly) (interchain with G-Cter in ubiquitin)). S673 is subject to Phosphoserine. K686 carries the N6-acetyllysine; alternate modification. Residue K686 forms a Glycyl lysine isopeptide (Lys-Gly) (interchain with G-Cter in ubiquitin); alternate linkage. K692 is covalently cross-linked (Glycyl lysine isopeptide (Lys-Gly) (interchain with G-Cter in ubiquitin)). Position 702 is an N6-acetyllysine; alternate (K702). Residue K702 forms a Glycyl lysine isopeptide (Lys-Gly) (interchain with G-Cter in ubiquitin); alternate linkage. Y711 carries the phosphotyrosine modification. Residues S713 and S717 each carry the phosphoserine modification. The tract at residues 715-734 (VVSGDTSPRHLSNVSSTGSI) is disordered. Over residues 718–733 (GDTSPRHLSNVSSTGS) the composition is skewed to polar residues. At T720 the chain carries Phosphothreonine. S721, S726, S733, and S739 each carry phosphoserine. T744 carries the post-translational modification Phosphothreonine.

In terms of assembly, interacts with MARK1, MARK2, MARK3 and MARK4. Interacts with SQSTM1 when polyubiquitinated. Interacts with PSMC2 through SQSTM1. Interacts with FKBP4. Binds to CSNK1D. Interacts with SGK1. Interacts with EPM2A; the interaction dephosphorylates MAPT at Ser-396. Interacts with PIN1. Interacts with LRRK2. Interacts with LRP1, leading to endocytosis; this interaction is reduced in the presence of LRPAP1/RAP. Polyubiquitinated. Requires functional TRAF6 and may provoke SQSTM1-dependent degradation by the proteasome. In terms of processing, phosphorylation at various serine and threonine residues in S-P or T-P motifs by proline-directed protein kinases (PDPK1, CDK1, CDK5, GSK3, MAPK) (a few sites per protein in interphase, more in mitosis), and at serine residues in K-X-G-S motifs by MAP/microtubule affinity-regulating kinase (MARK1, MARK2, MARK3 or MARK4), causing detachment from microtubules, and their disassembly. Phosphorylation at Ser-579 by BRSK1 and BRSK2 in neurons affects ability to bind microtubules and plays a role in neuron polarization. Phosphorylated by PHK. Dephosphorylation at several serine and threonine residues by the serine/threonine phosphatase PPP5C. Phosphorylation at Ser-214 by SGK1 mediates microtubule depolymerization and neurite formation in hippocampal neurons.

It localises to the cytoplasm. The protein localises to the cytosol. It is found in the cell membrane. The protein resides in the cytoskeleton. Its subcellular location is the cell projection. It localises to the axon. The protein localises to the dendrite. Promotes microtubule assembly and stability, and might be involved in the establishment and maintenance of neuronal polarity. The C-terminus binds axonal microtubules while the N-terminus binds neural plasma membrane components, suggesting that tau functions as a linker protein between both. Axonal polarity is predetermined by tau localization (in the neuronal cell) in the domain of the cell body defined by the centrosome. The short isoforms allow plasticity of the cytoskeleton whereas the longer isoforms may preferentially play a role in its stabilization. The chain is Microtubule-associated protein tau (MAPT) from Pongo pygmaeus (Bornean orangutan).